The primary structure comprises 312 residues: DNA-directed RNA polymerase subunit alpha (312 aa).

Residues 1-229 are alpha N-terminal domain (alpha-NTD); sequence MLQYQIDRIE…ELFQPLATVT (229 aa). Residues 245-312 form an alpha C-terminal domain (alpha-CTD) region; that stretch reads QIPLEELNLS…ISIPQSRTSA (68 aa).

It belongs to the RNA polymerase alpha chain family. As to quaternary structure, in cyanobacteria the RNAP catalytic core is composed of 2 alpha, 1 beta, 1 beta', 1 gamma and 1 omega subunit. When a sigma factor is associated with the core the holoenzyme is formed, which can initiate transcription.

It carries out the reaction RNA(n) + a ribonucleoside 5'-triphosphate = RNA(n+1) + diphosphate. Its function is as follows. DNA-dependent RNA polymerase catalyzes the transcription of DNA into RNA using the four ribonucleoside triphosphates as substrates. The polypeptide is DNA-directed RNA polymerase subunit alpha (Prochlorococcus marinus (strain MIT 9313)).